We begin with the raw amino-acid sequence, 569 residues long: WD repeat-containing protein 20 (569 aa).

Alanine 2 carries the post-translational modification N-acetylalanine. 7 WD repeats span residues 94–138 (RIYK…KETS), 139–210 (KLFN…KSTR), 211–252 (NPLL…FDSV), 253–331 (ELHG…SGSD), 332–426 (EDFQ…NSVP), 427–523 (PPLP…VPLL), and 524–559 (EPLI…CTWG). 2 positions are modified to phosphoserine: serine 357 and serine 360. Composition is skewed to polar residues over residues 405–423 (NATS…TPGN) and 431–445 (RSNS…NAGS). The interval 405–445 (NATSPPAGSNGNSVTTPGNSVPPPLPRSNSLPHSAVSNAGS) is disordered. Residues serine 432, serine 434, and serine 465 each carry the phosphoserine modification. Residues 450–468 (MDGAIASGVSKFATLSLHD) are mediates XPO1-dependent nuclear export of WDR20-USP12 complexes.

Interacts with USP12; promotes translocation of USP12/WDR20 to the plasma membrane. Component of the USP12/WDR20/WDR48 deubiquitinating complex. Interacts with USP46; contributes to the cytoplasmic localization of the USP46/WDR20 complex. Component of the USP12/DMWD/WDR48 deubiquitinating complex.

The protein localises to the cytoplasm. It localises to the nucleus. Functionally, regulator of deubiquitinating complexes. Activates deubiquitinating activity of complexes containing USP12. Anchors at the base of the ubiquitin-contacting loop of USP12 and remotely modulates the catalytic center of the enzyme. Regulates shuttling of the USP12 deubiquitinase complex between the plasma membrane, cytoplasm and nucleus. The chain is WD repeat-containing protein 20 (WDR20) from Homo sapiens (Human).